Consider the following 496-residue polypeptide: Glutamate--tRNA ligase (496 aa).

Residues 10–20 (PSPTGPLHIGG) carry the 'HIGH' region motif. Positions 251 to 255 (KMSKR) match the 'KMSKS' region motif. K254 lines the ATP pocket.

It belongs to the class-I aminoacyl-tRNA synthetase family. Glutamate--tRNA ligase type 1 subfamily. Monomer.

Its subcellular location is the cytoplasm. The catalysed reaction is tRNA(Glu) + L-glutamate + ATP = L-glutamyl-tRNA(Glu) + AMP + diphosphate. Functionally, catalyzes the attachment of glutamate to tRNA(Glu) in a two-step reaction: glutamate is first activated by ATP to form Glu-AMP and then transferred to the acceptor end of tRNA(Glu). The protein is Glutamate--tRNA ligase of Heliobacterium modesticaldum (strain ATCC 51547 / Ice1).